Reading from the N-terminus, the 255-residue chain is uncharacterized protein (255 aa).

This sequence belongs to the IIV-6 155L family.

This is an uncharacterized protein from Acheta domesticus (House cricket).